The chain runs to 496 residues: Probable E3 ubiquitin-protein ligase ARI12 (496 aa).

The segment at 110-319 (NEYFCGACGE…GDLHFCTFDA (210 aa)) is TRIAD supradomain. Residues Cys114, Cys117, Cys131, His133, Cys136, Cys139, Cys162, Cys172, Cys240, Cys243, His248, Cys253, Cys267, Cys270, Cys286, and Cys289 each contribute to the Zn(2+) site. An RING-type 1 zinc finger spans residues 114-172 (CGACGESHPHKNLASVSCGHRICTRCWTSHINKIISEKPAAEWNLWLKCPVRVGLHASC). The segment at 191–253 (FNYNQYLLRS…REDAHSPVDC (63 aa)) adopts an IBR-type zinc-finger fold. An RING-type 2; atypical zinc finger spans residues 267 to 297 (CPKCKLRIPRNQDNSLKMKCLPCNYVFCWFC).

Belongs to the RBR family. Ariadne subfamily. Requires Zn(2+) as cofactor. In terms of tissue distribution, preferentially expressed in roots.

The catalysed reaction is [E2 ubiquitin-conjugating enzyme]-S-ubiquitinyl-L-cysteine + [acceptor protein]-L-lysine = [E2 ubiquitin-conjugating enzyme]-L-cysteine + [acceptor protein]-N(6)-ubiquitinyl-L-lysine.. Its pathway is protein modification; protein ubiquitination. Functionally, might act as an E3 ubiquitin-protein ligase, or as part of E3 complex, which accepts ubiquitin from specific E2 ubiquitin-conjugating enzymes and then transfers it to substrates. The polypeptide is Probable E3 ubiquitin-protein ligase ARI12 (ARI12) (Arabidopsis thaliana (Mouse-ear cress)).